The chain runs to 402 residues: uncharacterized protein (402 aa).

It belongs to the peptidase M20 family.

This is an uncharacterized protein from Sinorhizobium fredii (strain NBRC 101917 / NGR234).